Consider the following 75-residue polypeptide: Probable protein BRICK1-A (75 aa).

A coiled-coil region spans residues methionine 41 to glutamate 72.

The protein belongs to the BRK1 family.

Its subcellular location is the cytoplasm. It localises to the cytoskeleton. In terms of biological role, involved in regulation of actin and microtubule organization. Part of a WAVE complex that activates the Arp2/3 complex. The polypeptide is Probable protein BRICK1-A (brk1-a) (Xenopus laevis (African clawed frog)).